We begin with the raw amino-acid sequence, 298 residues long: Thymidylate synthase (298 aa).

DUMP-binding positions include Arg-25 and 159–160; that span reads RR. Catalysis depends on Cys-179, which acts as the Nucleophile. DUMP is bound by residues 200–203, Asn-211, and 241–243; these read RSVD and HLY. Asp-203 lines the (6R)-5,10-methylene-5,6,7,8-tetrahydrofolate pocket. Residue Ala-297 participates in (6R)-5,10-methylene-5,6,7,8-tetrahydrofolate binding.

This sequence belongs to the thymidylate synthase family. Bacterial-type ThyA subfamily. As to quaternary structure, homodimer.

It localises to the cytoplasm. It catalyses the reaction dUMP + (6R)-5,10-methylene-5,6,7,8-tetrahydrofolate = 7,8-dihydrofolate + dTMP. The protein operates within pyrimidine metabolism; dTTP biosynthesis. Catalyzes the reductive methylation of 2'-deoxyuridine-5'-monophosphate (dUMP) to 2'-deoxythymidine-5'-monophosphate (dTMP) while utilizing 5,10-methylenetetrahydrofolate (mTHF) as the methyl donor and reductant in the reaction, yielding dihydrofolate (DHF) as a by-product. This enzymatic reaction provides an intracellular de novo source of dTMP, an essential precursor for DNA biosynthesis. The chain is Thymidylate synthase from Cereibacter sphaeroides (strain ATCC 17025 / ATH 2.4.3) (Rhodobacter sphaeroides).